Reading from the N-terminus, the 596-residue chain is Aspartate--tRNA(Asp/Asn) ligase (596 aa).

L-aspartate is bound at residue glutamate 173. The interval 197–200 (QLFK) is aspartate. An L-aspartate-binding site is contributed by arginine 219. Residues 219–221 (RDE) and glutamine 228 each bind ATP. Position 450 (histidine 450) interacts with L-aspartate. Glutamate 485 provides a ligand contact to ATP. Arginine 492 provides a ligand contact to L-aspartate. 537–540 (GLDR) contributes to the ATP binding site.

This sequence belongs to the class-II aminoacyl-tRNA synthetase family. Type 1 subfamily. As to quaternary structure, homodimer.

Its subcellular location is the cytoplasm. It carries out the reaction tRNA(Asx) + L-aspartate + ATP = L-aspartyl-tRNA(Asx) + AMP + diphosphate. Aspartyl-tRNA synthetase with relaxed tRNA specificity since it is able to aspartylate not only its cognate tRNA(Asp) but also tRNA(Asn). Reaction proceeds in two steps: L-aspartate is first activated by ATP to form Asp-AMP and then transferred to the acceptor end of tRNA(Asp/Asn). In Hydrogenovibrio crunogenus (strain DSM 25203 / XCL-2) (Thiomicrospira crunogena), this protein is Aspartate--tRNA(Asp/Asn) ligase.